The primary structure comprises 1135 residues: MRILKLLELVVKVSLFTIALSSVLLAFLTFRATDAKVEIIRGDHPEIYDDSAENEVPTAASIQREAILETLTNLVLESRTPGTRQIREEKLTIPISTEPATQKTISVLDLPNNCLNASSLKCEIKGISTYNVYYQVENNGVIYSSVSDSAEGLEKCDNSLNLPKRFSKVPVIPITKLDNKRHFSVGTNFFIPESLTQDNYPITYNSYPTNGTVSLQTVKLSGDCKITKSNFANPYTVSITSPEKIMGYLIKKPGENVEHKVIAFSGSASITFTEEMLDGEHNLLCGDKSAKIPKTNKRVRDCIIKYSKSIYKQTACINFSWIRLILIALLIYFPIRWLVNKTTKPLFLWYDLMGLITYPVLLLINCLWKYFPFKCSNCGNLCIVTRECTKVCICNKSKASKEHSSECPILSKEADHDYNKHKWTSMEWFHLIVNTKLSLSLLKFVTEILIGLVILSQIPMSMAQTTQCLSGCFYVPGCPFLVTSKFEKCPEKDQCYCNVKEDKIIESIFGTNIVIEGPNDCIENQNCIARPSIDNLIKCRLGCEYLDLFQNKPLYNGFSDYTESSLGLTSVGLYEAKRLRNGIIDSYNRTDKISGMIAGDSLDKNETSIPENILPRQSLIFDSVVDGKYRYMIEQSLLGGGGTIFMLNDKTSETAKKFVIYIKSVGIHHEVSEEYTTAPIQSTHTDFYPTCIGNCDTCRKNQALTGFQDFCITPTSYWGCEEAWCFAINEGATCGFCRNIYDIDKSYRIYSVLKSTIVADVCISGILGGQCSRITEEVPYENTLFQADIQSDLHNDGITIGELIAHGPDSHIYSGNIANLNDPVKMFGHPQLTHDGVPIFTKKTLEGDDMSWDCAATGKKSVTIKTCGYDTYRFRSGLEQISDIPVSFKDFSSFFLEKSFSLGELKIVVDLPSDLFKVVPKKPSITSTSLNCNGCLLCGQGLSCILEFFSDLTFSTAISIDACSLSTYQLAVKKGSNKYNITMFCSANPDKKKMTLYPEGNPDIPVEVLVNNVIIEEPENIIDQNDEYAHEEQQYNSDSSAWGFWDYIKSPFNFIASYFGSFFDTIRVVLLIAFIFLVIYFCSILTSICKGYVKHKSYKSRSKIEDDDEPEIKAPMLMKDTMTRRRPPMDFSHLV.

The first 35 residues, 1 to 35, serve as a signal peptide directing secretion; that stretch reads MRILKLLELVVKVSLFTIALSSVLLAFLTFRATDA. Topologically, residues 36–314 are lumenal; sequence KVEIIRGDHP…KYSKSIYKQT (279 aa). The short motif at 41-43 is the Cell attachment site element; sequence RGD. A glycan (N-linked (GlcNAc...) asparagine; by host) is linked at N116. A disulfide bridge links C122 with C156. The interval 177–195 is non-covalent dimerization; it reads LDNKRHFSVGTNFFIPESL. Residue N210 is glycosylated (N-linked (GlcNAc...) asparagine; by host). A disulfide bridge connects residues C224 and C285. Residues 315-366 traverse the membrane as a helical segment; the sequence is ACINFSWIRLILIALLIYFPIRWLVNKTTKPLFLWYDLMGLITYPVLLLINC. Topologically, residues 367–484 are cytoplasmic; sequence LWKYFPFKCS…VPGCPFLVTS (118 aa). A signal for signal peptide peptidase region spans residues 437 to 484; that stretch reads LSLSLLKFVTEILIGLVILSQIPMSMAQTTQCLSGCFYVPGCPFLVTS. Residues 485–1067 are Lumenal-facing; sequence KFEKCPEKDQ…YFGSFFDTIR (583 aa). 3 N-linked (GlcNAc...) asparagine; by host glycosylation sites follow: N588, N605, and N980. Residues 1068–1088 form a helical membrane-spanning segment; the sequence is VVLLIAFIFLVIYFCSILTSI. Topologically, residues 1089-1135 are cytoplasmic; the sequence is CKGYVKHKSYKSRSKIEDDDEPEIKAPMLMKDTMTRRRPPMDFSHLV.

It belongs to the tospovirus envelope glycoprotein family. Homodimer; disulfide-linked. Heterodimer with Glycoprotein C. Interacts with nucleoprotein. As to quaternary structure, heterodimer with Glycoprotein N. Interacts with nucleoprotein. Specific enzymatic cleavages in vivo yield mature proteins including Glycoprotein N and Glycoprotein C. In terms of processing, glycosylated with O-linked glycans. Glycosylation is essential for proper subcellular location. Post-translationally, cleaved at acidic pH.

Its subcellular location is the virion membrane. It is found in the host Golgi apparatus membrane. The protein resides in the host endoplasmic reticulum membrane. Functionally, forms the spikes present at the surface of the virion together with Glycoprotein C. They are able to attach the virion to a cell receptor and to promote fusion of membranes after endocytosis of the virion. Plays a role in virus binding and/or entry into the vector midgut. Its function is as follows. Forms the spikes present at the surface of the virion together with Glycoprotein N. They are able to attach the virion to a cell receptor and to promote fusion of membranes after endocytosis of the virion. Probable class II fusion protein. This chain is Envelopment polyprotein (GP), found in Frankliniella occidentalis (Western flower thrips).